A 420-amino-acid polypeptide reads, in one-letter code: 3-isopropylmalate dehydratase large subunit (420 aa).

3 residues coordinate [4Fe-4S] cluster: C300, C360, and C363.

The protein belongs to the aconitase/IPM isomerase family. LeuC type 2 subfamily. In terms of assembly, heterodimer of LeuC and LeuD. The cofactor is [4Fe-4S] cluster.

It carries out the reaction (2R,3S)-3-isopropylmalate = (2S)-2-isopropylmalate. The protein operates within amino-acid biosynthesis; L-leucine biosynthesis; L-leucine from 3-methyl-2-oxobutanoate: step 2/4. In terms of biological role, catalyzes the isomerization between 2-isopropylmalate and 3-isopropylmalate, via the formation of 2-isopropylmaleate. The polypeptide is 3-isopropylmalate dehydratase large subunit (Helicobacter hepaticus (strain ATCC 51449 / 3B1)).